The chain runs to 701 residues: MSKKRIYEYAKDLKIKSKEIIHELKKMDVEVTSHMQTLEDDQIKALDKIYKPEKAEQSEKSQQKNTQNKQQTTHNKGNQSNKGNQNNKPNNKKNNKNNKNNKNNKNNKQPKQEEPKEMPSKITYQDGITVGELAEKLNVDSSGIIKKLFLLGIMANINQSLDDETLELIVDDYGVEIEKEIVVDEEDLAIYFDDETEDENAIERPAVVTIMGHVDHGKTTLLDSIRHTKVTAGEAGGITQHIGAYQIENDGKKITFLDTPGHAAFTTMRARGAQVTDITILVVAADDGVMPQTIEAINHAKEAEVPTIVAVNKIDKPTSNPDRVMQELTEYGLIPEDWGGDTIFVPLSALSGDGIEDLLEMIVLTSEVQELKANPEKNAVGTVIEAELDKSRGPSASLLVQNGTLNVGDSLVVGNTYGRIRAMVNDLGQRIKTAGPSTPVEITGINDVPQAGDRFVVFKDEKQARRIGEARHEANVMQQRQESKSVSLDNLFEQMKQGEMKDLNVIIKGDVQGSVEALAASLMKIDVEGVNVRIIHTAVGAINESDVTLANASNGIIIGFNVRPDTGAKRAADNEGVDMRLHRVIYNVIEEIESAMKGMLDPEFEEQVIGQAEVRQTFKVSKVGTIAGSYVIDGKITRNAGVRVIRDGIVQFEGELDTLKRFKDDAKEVAQGYECGITIEKYNDLKEGDIIEAFEMVEIKR.

A compositionally biased stretch (basic and acidic residues) spans 48 to 62 (KIYKPEKAEQSEKSQ). The interval 48–123 (KIYKPEKAEQ…EPKEMPSKIT (76 aa)) is disordered. Composition is skewed to low complexity over residues 63–89 (QKNTQNKQQTTHNKGNQSNKGNQNNKP) and 97–109 (NNKNNKNNKNNKQ). Basic and acidic residues predominate over residues 110-119 (PKQEEPKEMP). In terms of domain architecture, tr-type G spans 203-372 (ERPAVVTIMG…VLTSEVQELK (170 aa)). The interval 212 to 219 (GHVDHGKT) is G1. Residue 212 to 219 (GHVDHGKT) participates in GTP binding. A G2 region spans residues 237 to 241 (GITQH). The tract at residues 258-261 (DTPG) is G3. Residues 258–262 (DTPGH) and 312–315 (NKID) each bind GTP. The interval 312-315 (NKID) is G4. Positions 348–350 (SAL) are G5.

Belongs to the TRAFAC class translation factor GTPase superfamily. Classic translation factor GTPase family. IF-2 subfamily.

It localises to the cytoplasm. Functionally, one of the essential components for the initiation of protein synthesis. Protects formylmethionyl-tRNA from spontaneous hydrolysis and promotes its binding to the 30S ribosomal subunits. Also involved in the hydrolysis of GTP during the formation of the 70S ribosomal complex. The chain is Translation initiation factor IF-2 from Staphylococcus saprophyticus subsp. saprophyticus (strain ATCC 15305 / DSM 20229 / NCIMB 8711 / NCTC 7292 / S-41).